A 406-amino-acid polypeptide reads, in one-letter code: MVSTIHCDSLWYGADIVTMRGGKYHLIPQGAMAVTDGKIVWIGPYNELPRLSASREVIYSSGLITPGLIDCHTHLVFGGDRSAEFEQRLNGVSYAEIAANGGGIVSTVRATRNASEQQLLEQALFRLKPLLAEGVTCIEIKSGYGLSLESEIKMLRVARQLGELLPVTVKTTCLAAHALPPEFSGRADDYIDFVCDTIIPQVAKEKLADAVDAFCEHLAFSLAQVERVFLAAQQAGLPVKLHAEQLSSLHGSTLAAKFNAMSADHLEYATESDVRAMADAGTVAVLLPGAYYLLRETQCPPIELFRQYNVPMALASDANPGTSPALSLRLMLNMACTLFRMTPEEALAGVTCHAAQALGLQETQGTLETGKLANWVHWPLSHPAELAYWLGGQLPASVVFQGDARP.

Fe(3+)-binding residues include His72 and His74. Positions 72 and 74 each coordinate Zn(2+). Residues Arg81, Tyr144, and His177 each contribute to the 4-imidazolone-5-propanoate site. N-formimidoyl-L-glutamate is bound at residue Tyr144. His242 is a binding site for Fe(3+). His242 contacts Zn(2+). Gln245 is a binding site for 4-imidazolone-5-propanoate. Fe(3+) is bound at residue Asp317. Asp317 serves as a coordination point for Zn(2+). Residues Asn319 and Gly321 each coordinate N-formimidoyl-L-glutamate. Thr322 lines the 4-imidazolone-5-propanoate pocket.

Belongs to the metallo-dependent hydrolases superfamily. HutI family. Requires Zn(2+) as cofactor. The cofactor is Fe(3+).

It localises to the cytoplasm. The catalysed reaction is 4-imidazolone-5-propanoate + H2O = N-formimidoyl-L-glutamate. Its pathway is amino-acid degradation; L-histidine degradation into L-glutamate; N-formimidoyl-L-glutamate from L-histidine: step 3/3. Its function is as follows. Catalyzes the hydrolytic cleavage of the carbon-nitrogen bond in imidazolone-5-propanoate to yield N-formimidoyl-L-glutamate. It is the third step in the universal histidine degradation pathway. In Yersinia enterocolitica serotype O:8 / biotype 1B (strain NCTC 13174 / 8081), this protein is Imidazolonepropionase.